Here is a 229-residue protein sequence, read N- to C-terminus: Sorting nexin-10A (229 aa).

The 118-residue stretch at 11–128 folds into the PX domain; that stretch reads FISVWVRDPQ…HLFLQSQLSI (118 aa). Positions 54 and 95 each coordinate a 1,2-diacyl-sn-glycero-3-phospho-(1D-myo-inositol-3-phosphate).

Belongs to the sorting nexin family.

The protein resides in the cytoplasm. It localises to the endosome membrane. The protein localises to the cytoskeleton. Its subcellular location is the microtubule organizing center. It is found in the centrosome. Functionally, probable phosphoinositide-binding protein involved in protein sorting and membrane trafficking in endosomes. May play a role in cilium biogenesis through regulation of the transport and the localization of proteins to the cilium. This chain is Sorting nexin-10A (snx10a), found in Danio rerio (Zebrafish).